Here is a 314-residue protein sequence, read N- to C-terminus: Methionyl-tRNA formyltransferase (314 aa).

Position 110–113 (110–113 (SLLP)) interacts with (6S)-5,6,7,8-tetrahydrofolate.

The protein belongs to the Fmt family.

The catalysed reaction is L-methionyl-tRNA(fMet) + (6R)-10-formyltetrahydrofolate = N-formyl-L-methionyl-tRNA(fMet) + (6S)-5,6,7,8-tetrahydrofolate + H(+). In terms of biological role, attaches a formyl group to the free amino group of methionyl-tRNA(fMet). The formyl group appears to play a dual role in the initiator identity of N-formylmethionyl-tRNA by promoting its recognition by IF2 and preventing the misappropriation of this tRNA by the elongation apparatus. The chain is Methionyl-tRNA formyltransferase from Bacillus cytotoxicus (strain DSM 22905 / CIP 110041 / 391-98 / NVH 391-98).